The following is a 630-amino-acid chain: Terpinolene synthase, chloroplastic (630 aa).

The N-terminal 52 residues, 1–52, are a transit peptide targeting the chloroplast; that stretch reads MALVSILPLSSKSVLHKSWIVSTYEHKAISRTIPNLGLRGRGKSVTHSLRMS. Residues Asp-381, Asp-385, Asn-525, and Asp-533 each contribute to the Mg(2+) site. Positions 381 to 385 match the DDXXD motif motif; the sequence is DDIYD.

Belongs to the terpene synthase family. Tpsd subfamily. It depends on Mg(2+) as a cofactor. Mn(2+) serves as cofactor. K(+) is required as a cofactor.

It localises to the plastid. The protein localises to the chloroplast. It catalyses the reaction (2E)-geranyl diphosphate = terpinolene + diphosphate. Its pathway is terpene metabolism; oleoresin biosynthesis. Involved in defensive oleoresin formation in conifers in response to insect attack or other injury. Involved in monoterpene (C10) olefins biosynthesis. The protein is Terpinolene synthase, chloroplastic (ag9) of Abies grandis (Grand fir).